Consider the following 179-residue polypeptide: Large ribosomal subunit protein uL5 (179 aa).

It belongs to the universal ribosomal protein uL5 family. In terms of assembly, part of the 50S ribosomal subunit; part of the 5S rRNA/L5/L18/L25 subcomplex. Contacts the 5S rRNA and the P site tRNA. Forms a bridge to the 30S subunit in the 70S ribosome.

Its function is as follows. This is one of the proteins that bind and probably mediate the attachment of the 5S RNA into the large ribosomal subunit, where it forms part of the central protuberance. In the 70S ribosome it contacts protein S13 of the 30S subunit (bridge B1b), connecting the 2 subunits; this bridge is implicated in subunit movement. Contacts the P site tRNA; the 5S rRNA and some of its associated proteins might help stabilize positioning of ribosome-bound tRNAs. This is Large ribosomal subunit protein uL5 from Desulfatibacillum aliphaticivorans.